A 441-amino-acid polypeptide reads, in one-letter code: ATP-dependent RNA helicase SUB2-1 (441 aa).

Acidic residues predominate over residues 1 to 19 (MSHEGEEDLLEYSDNEQDI). Positions 1-46 (MSHEGEEDLLEYSDNEQDIQVDASKAAEPSELDATTAEDASNGDAE) are disordered. Positions 57 to 85 (TGFKDFLLKPELARAIIDCGFEHPSEVQQ) match the Q motif motif. The region spanning 88–263 (IPQSIHGTDV…RRFLQNPLEI (176 aa)) is the Helicase ATP-binding domain. 101-108 (AKSGLGKT) provides a ligand contact to ATP. The short motif at 210–213 (DECD) is the DECD box element. Residues 291–436 (KLAQLLDDLE…EFPEEGIDPS (146 aa)) enclose the Helicase C-terminal domain.

Belongs to the DEAD box helicase family. DECD subfamily.

Its subcellular location is the nucleus. The catalysed reaction is ATP + H2O = ADP + phosphate + H(+). In terms of biological role, ATP-binding RNA helicase involved in transcription elongation and required for the export of mRNA out of the nucleus. SUB2 also plays a role in pre-mRNA splicing and spliceosome assembly. May be involved in rDNA and telomeric silencing, and maintenance of genome integrity. The chain is ATP-dependent RNA helicase SUB2-1 (SUB2-1) from Vanderwaltozyma polyspora (strain ATCC 22028 / DSM 70294 / BCRC 21397 / CBS 2163 / NBRC 10782 / NRRL Y-8283 / UCD 57-17) (Kluyveromyces polysporus).